Consider the following 425-residue polypeptide: SWI5-dependent HO expression protein 3 (425 aa).

Positions 24–45 (NLESSPTKDRNTSSQNASSSRV) are disordered. The segment covering 35-45 (TSSQNASSSRV) has biased composition (polar residues). The stretch at 68 to 197 (QNLLSKLELA…LELSNQNLNY (130 aa)) forms a coiled coil. Residues 322–425 (RKTPNTNDSS…NSMVVHGAQS (104 aa)) are disordered. Residues 326–338 (NTNDSSSNGNSSN) are compositionally biased toward low complexity. The residue at position 343 (serine 343) is a Phosphoserine. Composition is skewed to polar residues over residues 345-358 (YTAS…SIPK) and 382-397 (KTNV…SPTI). Position 394 is a phosphoserine (serine 394).

The protein belongs to the SHE3 family. Interacts with SHE2 and MYO4.

It localises to the endoplasmic reticulum membrane. In terms of biological role, RNA-binding protein that binds specific mRNAs including the ASH1 mRNA, coding for a repressor of the HO endonuclease. Part of the mRNA localization machinery that restricts accumulation of certain proteins to the bud and in the daughter cell. Required for the delivery of cortical endoplasmic reticulum into the emerging bud. The protein is SWI5-dependent HO expression protein 3 (SHE3) of Saccharomyces cerevisiae (strain ATCC 204508 / S288c) (Baker's yeast).